A 322-amino-acid chain; its full sequence is Undecaprenyl-phosphate 4-deoxy-4-formamido-L-arabinose transferase (322 aa).

At Met1–Met235 the chain is on the cytoplasmic side. A helical transmembrane segment spans residues Leu236–Ile256. Residues Leu257 to Gly269 are Periplasmic-facing. Residues Val270–Leu290 form a helical membrane-spanning segment. Residues Leu291–Glu322 are Cytoplasmic-facing.

The protein belongs to the glycosyltransferase 2 family.

The protein resides in the cell inner membrane. The catalysed reaction is UDP-4-deoxy-4-formamido-beta-L-arabinose + di-trans,octa-cis-undecaprenyl phosphate = 4-deoxy-4-formamido-alpha-L-arabinopyranosyl di-trans,octa-cis-undecaprenyl phosphate + UDP. It participates in glycolipid biosynthesis; 4-amino-4-deoxy-alpha-L-arabinose undecaprenyl phosphate biosynthesis; 4-amino-4-deoxy-alpha-L-arabinose undecaprenyl phosphate from UDP-4-deoxy-4-formamido-beta-L-arabinose and undecaprenyl phosphate: step 1/2. Its pathway is bacterial outer membrane biogenesis; lipopolysaccharide biosynthesis. Catalyzes the transfer of 4-deoxy-4-formamido-L-arabinose from UDP to undecaprenyl phosphate. The modified arabinose is attached to lipid A and is required for resistance to polymyxin and cationic antimicrobial peptides. The polypeptide is Undecaprenyl-phosphate 4-deoxy-4-formamido-L-arabinose transferase (Shigella dysenteriae serotype 1 (strain Sd197)).